Here is a 444-residue protein sequence, read N- to C-terminus: Divalent metal cation transporter MntH (444 aa).

11 helical membrane-spanning segments follow: residues 31–51 (GGHWWFRLLAFLGPGYMVSVG), 68–88 (FGYLLLSVILLSNLMAIVLQG), 115–135 (LALWGLCELAIIACDLAEVIG), 146–166 (IPLTLGAIITALDVVLVLLLM), 175–195 (AFVMALLLVIFVCFGIQIALA), 212–232 (VVTNPHALYLAIGIIGATVMP), 267–287 (VALMFALFINAAILILAAAVF), 303–323 (ALLAPMLGVGLASTLFAVALL), 356–376 (LLTRGIAIVPVVVVTWLYGEA), 381–401 (LLVLSQVVLSMQLPFAVIPLV), and 413–433 (LVAPAWLVRLAWVIALVIVGL).

It belongs to the NRAMP family.

Its subcellular location is the cell inner membrane. H(+)-stimulated, divalent metal cation uptake system. The chain is Divalent metal cation transporter MntH from Xanthomonas campestris pv. campestris (strain ATCC 33913 / DSM 3586 / NCPPB 528 / LMG 568 / P 25).